A 582-amino-acid chain; its full sequence is ATP-dependent lipid A-core flippase (582 aa).

The next 5 membrane-spanning stretches (helical) occupy residues 16–36 (LWPT…ALIL), 63–83 (VLVW…ITSY), 153–173 (IIGL…ILIV), 253–273 (PIIQ…ASFP), and 275–295 (VMDN…IALM). The ABC transmembrane type-1 domain maps to 28–310 (IVAGVALILN…LTNVNAQFQR (283 aa)). Residues 342-578 (VEFRNVTFTY…RGVYAQLHKM (237 aa)) enclose the ABC transporter domain. 376–383 (GRSGSGKS) contacts ATP.

It belongs to the ABC transporter superfamily. Lipid exporter (TC 3.A.1.106) family. As to quaternary structure, homodimer.

Its subcellular location is the cell inner membrane. The enzyme catalyses ATP + H2O + lipid A-core oligosaccharideSide 1 = ADP + phosphate + lipid A-core oligosaccharideSide 2.. Its function is as follows. Involved in lipopolysaccharide (LPS) biosynthesis. Translocates lipid A-core from the inner to the outer leaflet of the inner membrane. Transmembrane domains (TMD) form a pore in the inner membrane and the ATP-binding domain (NBD) is responsible for energy generation. In Shigella sonnei (strain Ss046), this protein is ATP-dependent lipid A-core flippase.